We begin with the raw amino-acid sequence, 139 residues long: 6,7-dimethyl-8-ribityllumazine synthase (139 aa).

5-amino-6-(D-ribitylamino)uracil contacts are provided by residues Phe13, 45-47 (VFD), and 69-71 (AVI). Position 74–75 (74–75 (AT)) interacts with (2S)-2-hydroxy-3-oxobutyl phosphate. His77 (proton donor) is an active-site residue. Leu102 is a binding site for 5-amino-6-(D-ribitylamino)uracil. Residue Arg117 coordinates (2S)-2-hydroxy-3-oxobutyl phosphate.

Belongs to the DMRL synthase family.

The catalysed reaction is (2S)-2-hydroxy-3-oxobutyl phosphate + 5-amino-6-(D-ribitylamino)uracil = 6,7-dimethyl-8-(1-D-ribityl)lumazine + phosphate + 2 H2O + H(+). It participates in cofactor biosynthesis; riboflavin biosynthesis; riboflavin from 2-hydroxy-3-oxobutyl phosphate and 5-amino-6-(D-ribitylamino)uracil: step 1/2. In terms of biological role, catalyzes the formation of 6,7-dimethyl-8-ribityllumazine by condensation of 5-amino-6-(D-ribitylamino)uracil with 3,4-dihydroxy-2-butanone 4-phosphate. This is the penultimate step in the biosynthesis of riboflavin. The protein is 6,7-dimethyl-8-ribityllumazine synthase of Methanothermobacter thermautotrophicus (strain ATCC 29096 / DSM 1053 / JCM 10044 / NBRC 100330 / Delta H) (Methanobacterium thermoautotrophicum).